The chain runs to 159 residues: Ribosomal RNA large subunit methyltransferase H (159 aa).

S-adenosyl-L-methionine contacts are provided by residues Leu-76, Gly-108, and 127 to 132 (FSKMTF).

The protein belongs to the RNA methyltransferase RlmH family. Homodimer.

Its subcellular location is the cytoplasm. The catalysed reaction is pseudouridine(1915) in 23S rRNA + S-adenosyl-L-methionine = N(3)-methylpseudouridine(1915) in 23S rRNA + S-adenosyl-L-homocysteine + H(+). Specifically methylates the pseudouridine at position 1915 (m3Psi1915) in 23S rRNA. This chain is Ribosomal RNA large subunit methyltransferase H, found in Exiguobacterium sp. (strain ATCC BAA-1283 / AT1b).